The sequence spans 310 residues: Probable manganese-dependent inorganic pyrophosphatase (310 aa).

Mn(2+) is bound by residues His-9, Asp-13, Asp-15, Asp-75, His-97, and Asp-149.

This sequence belongs to the PPase class C family. Mn(2+) serves as cofactor.

The protein localises to the cytoplasm. The enzyme catalyses diphosphate + H2O = 2 phosphate + H(+). The chain is Probable manganese-dependent inorganic pyrophosphatase from Bacillus cytotoxicus (strain DSM 22905 / CIP 110041 / 391-98 / NVH 391-98).